Here is a 367-residue protein sequence, read N- to C-terminus: Avirulence protein ATR5 (367 aa).

An N-terminal signal peptide occupies residues M1–A16. The N-linked (GlcNAc...) asparagine glycan is linked to N20. Residues N33 to T65 form a disordered region. A compositionally biased stretch (basic and acidic residues) spans R54 to T65. Residues T61–R64 carry the dEER motif.

Belongs to the RxLR effector family.

The protein resides in the secreted. The protein localises to the host cell. In terms of biological role, secreted effector that acts as an elicitor of hypersensitive response (HR) specifically on plants carrying defense protein RPP5. This Hyaloperonospora arabidopsidis (strain Emoy2) (Downy mildew agent) protein is Avirulence protein ATR5.